Reading from the N-terminus, the 282-residue chain is S-formylglutathione hydrolase (282 aa).

Position 4 is an N6-succinyllysine (lysine 4). Serine 149 serves as the catalytic Charge relay system. The residue at position 200 (lysine 200) is an N6-acetyllysine. Active-site charge relay system residues include aspartate 226 and histidine 260.

This sequence belongs to the esterase D family. As to quaternary structure, homodimer.

The protein resides in the cytoplasm. Its subcellular location is the cytoplasmic vesicle. The catalysed reaction is S-formylglutathione + H2O = formate + glutathione + H(+). In terms of biological role, serine hydrolase involved in the detoxification of formaldehyde. The chain is S-formylglutathione hydrolase (Esd) from Rattus norvegicus (Rat).